The sequence spans 363 residues: Probable dual-specificity RNA methyltransferase RlmN (363 aa).

E99 (proton acceptor) is an active-site residue. One can recognise a Radical SAM core domain in the interval 105–341; the sequence is SENRMTACVS…VTVRKSHGAS (237 aa). A disulfide bridge connects residues C112 and C346. [4Fe-4S] cluster contacts are provided by C119, C123, and C126. S-adenosyl-L-methionine contacts are provided by residues 171–172, S204, 227–229, and N303; these read GE and SLH. Catalysis depends on C346, which acts as the S-methylcysteine intermediate.

Belongs to the radical SAM superfamily. RlmN family. The cofactor is [4Fe-4S] cluster.

It localises to the cytoplasm. It catalyses the reaction adenosine(2503) in 23S rRNA + 2 reduced [2Fe-2S]-[ferredoxin] + 2 S-adenosyl-L-methionine = 2-methyladenosine(2503) in 23S rRNA + 5'-deoxyadenosine + L-methionine + 2 oxidized [2Fe-2S]-[ferredoxin] + S-adenosyl-L-homocysteine. The catalysed reaction is adenosine(37) in tRNA + 2 reduced [2Fe-2S]-[ferredoxin] + 2 S-adenosyl-L-methionine = 2-methyladenosine(37) in tRNA + 5'-deoxyadenosine + L-methionine + 2 oxidized [2Fe-2S]-[ferredoxin] + S-adenosyl-L-homocysteine. Specifically methylates position 2 of adenine 2503 in 23S rRNA and position 2 of adenine 37 in tRNAs. The protein is Probable dual-specificity RNA methyltransferase RlmN of Chlorobium phaeobacteroides (strain DSM 266 / SMG 266 / 2430).